Here is a 544-residue protein sequence, read N- to C-terminus: Ribosomal protein S6 kinase-like 1 (544 aa).

One can recognise an MIT domain in the interval 87 to 115 (VHVDPNKERREAVKLKITKYLRRAEEIFN). Residues 145–534 (SALEQLKGCR…TSRLKSHPFF (390 aa)) form the Protein kinase domain. Residues 151–159 (KGCRVVGII) and K177 each bind ATP. Disordered stretches follow at residues 262–344 (PAEL…HWVR) and 353–372 (AYGRGRGRNPPSANRASLGS). The span at 303 to 313 (SRPSAVFSSDP) shows a compositional bias: polar residues. Catalysis depends on D407, which acts as the Proton acceptor.

Belongs to the protein kinase superfamily. Ser/Thr protein kinase family. S6 kinase subfamily.

The enzyme catalyses L-seryl-[protein] + ATP = O-phospho-L-seryl-[protein] + ADP + H(+). It carries out the reaction L-threonyl-[protein] + ATP = O-phospho-L-threonyl-[protein] + ADP + H(+). In Mus musculus (Mouse), this protein is Ribosomal protein S6 kinase-like 1 (Rps6kl1).